The following is a 298-amino-acid chain: MRWPWSGHDEEKKRNAATRSKRAETANSWTGTLLESRTLVPSVALTVSTVLGLRLYKAYFRRIPTVNHIKPDYFRRRTLFGQVTSVGDADNFRLYHTPGGRLAGWGWLPWKTVPTKREALVKQTVGPVLILWRLRPRRISSDWMLKAIQLHIRIAGVDAPELAHWGREAQPYSKEALDWLTQLILHQRVRVRLYRRDQYDRVVAQVYYRRWFFRQDVGLEMLKMGLATVYEAKSGAEFGDVEQQYRAAEEKAKESRAGMWAKPNLLQRLGGAGTKAPESPREYKSRHTAAEKQKKAAW.

The interval 1 to 24 is disordered; that stretch reads MRWPWSGHDEEKKRNAATRSKRAE. Residues 39–56 form a helical membrane-spanning segment; the sequence is LVPSVALTVSTVLGLRLY. The TNase-like domain maps to 77–262; that stretch reads RTLFGQVTSV…KESRAGMWAK (186 aa). R153 is a catalytic residue. D158 contributes to the Ca(2+) binding site. Active-site residues include E161 and R201. The segment at 269–298 is disordered; that stretch reads LGGAGTKAPESPREYKSRHTAAEKQKKAAW. Positions 278–298 are enriched in basic and acidic residues; the sequence is ESPREYKSRHTAAEKQKKAAW.

Belongs to the LCL3 family.

Its subcellular location is the mitochondrion. The protein resides in the membrane. This is Probable endonuclease LCL3 (LCL3) from Leptosphaeria maculans (strain JN3 / isolate v23.1.3 / race Av1-4-5-6-7-8) (Blackleg fungus).